Reading from the N-terminus, the 264-residue chain is Cercarial protease (264 aa).

Residues 1 to 19 form the signal peptide; the sequence is MSNRWRFVVVVTLFTYCLT. Positions 20 to 27 are excised as a propeptide; the sequence is FERVSTWL. Residues 28 to 264 enclose the Peptidase S1 domain; the sequence is IRSGEPVQHP…RMLDFVRSNI (237 aa). Cysteine 53 and cysteine 69 are disulfide-bonded. Residues histidine 68 and aspartate 126 each act as charge relay system in the active site. Cysteine 192 and cysteine 202 are joined by a disulfide. The active-site Charge relay system is the serine 218.

Belongs to the peptidase S1 family. As to expression, acetabular (penetration) glands.

With respect to regulation, activated by an autocatalytic mechanism. Its function is as follows. This protease cleaves elastin and thus facilitates penetration of schistosome parasite larvae through elastin-rich tissue of the host. This chain is Cercarial protease, found in Schistosoma mansoni (Blood fluke).